The following is a 190-amino-acid chain: Pyridoxamine 5'-phosphate oxidase C1952.08c homolog (190 aa).

The FMN site is built by Ser-62 and Lys-69.

It belongs to the pyridoxamine 5'-phosphate oxidase family. FMN serves as cofactor.

The protein localises to the cytoplasm. The protein resides in the nucleus. The protein is Pyridoxamine 5'-phosphate oxidase C1952.08c homolog of Schizosaccharomyces pombe (strain 972 / ATCC 24843) (Fission yeast).